A 199-amino-acid polypeptide reads, in one-letter code: Transcription regulator complex subunit bur6 (199 aa).

The interval Pro-106 to Glu-199 is disordered. The segment covering Arg-112–Arg-121 has biased composition (basic residues). The span at Ser-185–Glu-199 shows a compositional bias: polar residues.

Belongs to the NC2 alpha/DRAP1 family.

The protein resides in the nucleus. Its function is as follows. Transcription regulator complex subunit that is essential for cell cycle progression. The polypeptide is Transcription regulator complex subunit bur6 (Schizosaccharomyces pombe (strain 972 / ATCC 24843) (Fission yeast)).